The chain runs to 840 residues: Probable inorganic carbon transporter subunit DabA (840 aa).

Cysteine 355, aspartate 357, histidine 539, and cysteine 554 together coordinate Zn(2+).

This sequence belongs to the inorganic carbon transporter (TC 9.A.2) DabA family. In terms of assembly, forms a complex with DabB. The cofactor is Zn(2+).

The protein localises to the cell membrane. Functionally, part of an energy-coupled inorganic carbon pump. The protein is Probable inorganic carbon transporter subunit DabA of Roseiflexus castenholzii (strain DSM 13941 / HLO8).